Reading from the N-terminus, the 301-residue chain is Lipoyl synthase (301 aa).

[4Fe-4S] cluster-binding residues include cysteine 53, cysteine 58, cysteine 64, cysteine 79, cysteine 83, cysteine 86, and serine 290. Residues 65-279 (WSRKTATYML…RIYGKSIGFK (215 aa)) enclose the Radical SAM core domain.

The protein belongs to the radical SAM superfamily. Lipoyl synthase family. [4Fe-4S] cluster is required as a cofactor.

The protein localises to the cytoplasm. The catalysed reaction is [[Fe-S] cluster scaffold protein carrying a second [4Fe-4S](2+) cluster] + N(6)-octanoyl-L-lysyl-[protein] + 2 oxidized [2Fe-2S]-[ferredoxin] + 2 S-adenosyl-L-methionine + 4 H(+) = [[Fe-S] cluster scaffold protein] + N(6)-[(R)-dihydrolipoyl]-L-lysyl-[protein] + 4 Fe(3+) + 2 hydrogen sulfide + 2 5'-deoxyadenosine + 2 L-methionine + 2 reduced [2Fe-2S]-[ferredoxin]. Its pathway is protein modification; protein lipoylation via endogenous pathway; protein N(6)-(lipoyl)lysine from octanoyl-[acyl-carrier-protein]: step 2/2. Functionally, catalyzes the radical-mediated insertion of two sulfur atoms into the C-6 and C-8 positions of the octanoyl moiety bound to the lipoyl domains of lipoate-dependent enzymes, thereby converting the octanoylated domains into lipoylated derivatives. This chain is Lipoyl synthase, found in Leptospira interrogans serogroup Icterohaemorrhagiae serovar copenhageni (strain Fiocruz L1-130).